The following is a 391-amino-acid chain: Succinate--CoA ligase [ADP-forming] subunit beta (391 aa).

One can recognise an ATP-grasp domain in the interval 9-248; the sequence is KDILRKFGVS…TGEEDPFEVE (240 aa). Residues Lys-50, 57-59, Glu-103, Met-106, and Glu-111 contribute to the ATP site; that span reads GRG. Asn-203 and Asp-217 together coordinate Mg(2+). Substrate is bound by residues Asn-268 and 325 to 327; that span reads GIV.

It belongs to the succinate/malate CoA ligase beta subunit family. In terms of assembly, heterotetramer of two alpha and two beta subunits. Requires Mg(2+) as cofactor.

The enzyme catalyses succinate + ATP + CoA = succinyl-CoA + ADP + phosphate. It catalyses the reaction GTP + succinate + CoA = succinyl-CoA + GDP + phosphate. Its pathway is carbohydrate metabolism; tricarboxylic acid cycle; succinate from succinyl-CoA (ligase route): step 1/1. Succinyl-CoA synthetase functions in the citric acid cycle (TCA), coupling the hydrolysis of succinyl-CoA to the synthesis of either ATP or GTP and thus represents the only step of substrate-level phosphorylation in the TCA. The beta subunit provides nucleotide specificity of the enzyme and binds the substrate succinate, while the binding sites for coenzyme A and phosphate are found in the alpha subunit. This Chlorobium phaeobacteroides (strain BS1) protein is Succinate--CoA ligase [ADP-forming] subunit beta.